Here is an 833-residue protein sequence, read N- to C-terminus: Glycerol-3-phosphate acyltransferase (833 aa).

The HXXXXD motif motif lies at H310–D315.

It belongs to the GPAT/DAPAT family.

It localises to the cell inner membrane. The catalysed reaction is sn-glycerol 3-phosphate + an acyl-CoA = a 1-acyl-sn-glycero-3-phosphate + CoA. The protein operates within phospholipid metabolism; CDP-diacylglycerol biosynthesis; CDP-diacylglycerol from sn-glycerol 3-phosphate: step 1/3. This is Glycerol-3-phosphate acyltransferase from Pseudomonas syringae pv. tomato (strain ATCC BAA-871 / DC3000).